The chain runs to 210 residues: Ribosomal RNA small subunit methyltransferase G (210 aa).

S-adenosyl-L-methionine contacts are provided by residues G76, M81, 127–128, and R145; that span reads VE.

The protein belongs to the methyltransferase superfamily. RNA methyltransferase RsmG family.

Its subcellular location is the cytoplasm. The enzyme catalyses guanosine(527) in 16S rRNA + S-adenosyl-L-methionine = N(7)-methylguanosine(527) in 16S rRNA + S-adenosyl-L-homocysteine. Functionally, specifically methylates the N7 position of guanine in position 527 of 16S rRNA. The polypeptide is Ribosomal RNA small subunit methyltransferase G (Acinetobacter baumannii (strain AB307-0294)).